We begin with the raw amino-acid sequence, 192 residues long: Large ribosomal subunit protein bL25 (192 aa).

Belongs to the bacterial ribosomal protein bL25 family. CTC subfamily. In terms of assembly, part of the 50S ribosomal subunit; part of the 5S rRNA/L5/L18/L25 subcomplex. Contacts the 5S rRNA. Binds to the 5S rRNA independently of L5 and L18.

Functionally, this is one of the proteins that binds to the 5S RNA in the ribosome where it forms part of the central protuberance. In Marinomonas sp. (strain MWYL1), this protein is Large ribosomal subunit protein bL25.